The sequence spans 345 residues: UDP-3-O-acylglucosamine N-acyltransferase (345 aa).

The active-site Proton acceptor is the H252.

Belongs to the transferase hexapeptide repeat family. LpxD subfamily. In terms of assembly, homotrimer.

The enzyme catalyses a UDP-3-O-[(3R)-3-hydroxyacyl]-alpha-D-glucosamine + a (3R)-hydroxyacyl-[ACP] = a UDP-2-N,3-O-bis[(3R)-3-hydroxyacyl]-alpha-D-glucosamine + holo-[ACP] + H(+). It participates in bacterial outer membrane biogenesis; LPS lipid A biosynthesis. Catalyzes the N-acylation of UDP-3-O-acylglucosamine using 3-hydroxyacyl-ACP as the acyl donor. Is involved in the biosynthesis of lipid A, a phosphorylated glycolipid that anchors the lipopolysaccharide to the outer membrane of the cell. The chain is UDP-3-O-acylglucosamine N-acyltransferase from Rickettsia rickettsii.